Reading from the N-terminus, the 245-residue chain is 4-hydroxy-tetrahydrodipicolinate reductase (245 aa).

Residues 7 to 12 (GAKGKV), 75 to 77 (GTT), and 102 to 105 (APNF) each bind NAD(+). His-132 (proton donor/acceptor) is an active-site residue. His-133 contacts (S)-2,3,4,5-tetrahydrodipicolinate. Lys-136 functions as the Proton donor in the catalytic mechanism. Residue 142-143 (GT) coordinates (S)-2,3,4,5-tetrahydrodipicolinate.

The protein belongs to the DapB family.

It localises to the cytoplasm. It catalyses the reaction (S)-2,3,4,5-tetrahydrodipicolinate + NAD(+) + H2O = (2S,4S)-4-hydroxy-2,3,4,5-tetrahydrodipicolinate + NADH + H(+). The enzyme catalyses (S)-2,3,4,5-tetrahydrodipicolinate + NADP(+) + H2O = (2S,4S)-4-hydroxy-2,3,4,5-tetrahydrodipicolinate + NADPH + H(+). Its pathway is amino-acid biosynthesis; L-lysine biosynthesis via DAP pathway; (S)-tetrahydrodipicolinate from L-aspartate: step 4/4. Functionally, catalyzes the conversion of 4-hydroxy-tetrahydrodipicolinate (HTPA) to tetrahydrodipicolinate. In Mycobacterium marinum (strain ATCC BAA-535 / M), this protein is 4-hydroxy-tetrahydrodipicolinate reductase.